The chain runs to 317 residues: Probable porphobilinogen deaminase (317 aa).

Cysteine 234 is modified (S-(dipyrrolylmethanemethyl)cysteine).

Belongs to the HMBS family. Requires dipyrromethane as cofactor.

The catalysed reaction is 4 porphobilinogen + H2O = hydroxymethylbilane + 4 NH4(+). Its pathway is porphyrin-containing compound metabolism; protoporphyrin-IX biosynthesis; coproporphyrinogen-III from 5-aminolevulinate: step 2/4. In terms of biological role, tetrapolymerization of the monopyrrole PBG into the hydroxymethylbilane pre-uroporphyrinogen in several discrete steps. The chain is Probable porphobilinogen deaminase from Methanosarcina acetivorans (strain ATCC 35395 / DSM 2834 / JCM 12185 / C2A).